A 686-amino-acid chain; its full sequence is Translation initiation factor IF-2 (686 aa).

Residues Lys-54–Asp-105 form a disordered region. The segment covering Arg-69–Gly-81 has biased composition (basic residues). The tr-type G domain occupies Glu-188–Lys-357. The G1 stretch occupies residues Gly-197–Thr-204. Gly-197–Thr-204 lines the GTP pocket. The G2 stretch occupies residues Gly-222–His-226. Positions Asp-243–Gly-246 are G3. Residues Asp-243–His-247 and Asn-297–Asp-300 contribute to the GTP site. The G4 stretch occupies residues Asn-297–Asp-300. Residues Ser-333–Ile-335 form a G5 region.

It belongs to the TRAFAC class translation factor GTPase superfamily. Classic translation factor GTPase family. IF-2 subfamily.

The protein resides in the cytoplasm. Functionally, one of the essential components for the initiation of protein synthesis. Protects formylmethionyl-tRNA from spontaneous hydrolysis and promotes its binding to the 30S ribosomal subunits. Also involved in the hydrolysis of GTP during the formation of the 70S ribosomal complex. The protein is Translation initiation factor IF-2 of Bacillus cereus (strain AH187).